A 217-amino-acid chain; its full sequence is MNAPHHPAHSTVRTKKLPPLRVGVGGPVGSGKTTLLEMLCKAMREQYDLVAITNDIYTKEDQRLLTVAGALPAERIMGVETGGCPHTAIREDASINLEAVDRMLTRFPDADIVFIESGGDNLAATFSPELSDLTIYVIDVAGGEKIPRKGGPGITKSDLLVINKTDLAPMVGANLEVMAADAKKMRGERPFVMCNLKALDGLDVVVKFIEKKGLLKV.

Residues 1–18 (MNAPHHPAHSTVRTKKLP) show a composition bias toward basic residues. The disordered stretch occupies residues 1–24 (MNAPHHPAHSTVRTKKLPPLRVGV). 26–33 (GPVGSGKT) lines the GTP pocket.

It belongs to the SIMIBI class G3E GTPase family. UreG subfamily. In terms of assembly, homodimer. UreD, UreF and UreG form a complex that acts as a GTP-hydrolysis-dependent molecular chaperone, activating the urease apoprotein by helping to assemble the nickel containing metallocenter of UreC. The UreE protein probably delivers the nickel.

It localises to the cytoplasm. Facilitates the functional incorporation of the urease nickel metallocenter. This process requires GTP hydrolysis, probably effectuated by UreG. The polypeptide is Urease accessory protein UreG (Paraburkholderia xenovorans (strain LB400)).